The primary structure comprises 291 residues: Acetyl-coenzyme A carboxylase carboxyl transferase subunit beta (291 aa).

The 269-residue stretch at 23-291 folds into the CoA carboxyltransferase N-terminal domain; the sequence is VWHKCPSCTA…PPDLPVEESV (269 aa). Cys27, Cys30, Cys46, and Cys49 together coordinate Zn(2+). Residues 27–49 form a C4-type zinc finger; the sequence is CPSCTAVLYRVELERNLEVCPKC.

This sequence belongs to the AccD/PCCB family. Acetyl-CoA carboxylase is a heterohexamer composed of biotin carboxyl carrier protein (AccB), biotin carboxylase (AccC) and two subunits each of ACCase subunit alpha (AccA) and ACCase subunit beta (AccD). The cofactor is Zn(2+).

It is found in the cytoplasm. The enzyme catalyses N(6)-carboxybiotinyl-L-lysyl-[protein] + acetyl-CoA = N(6)-biotinyl-L-lysyl-[protein] + malonyl-CoA. Its pathway is lipid metabolism; malonyl-CoA biosynthesis; malonyl-CoA from acetyl-CoA: step 1/1. Component of the acetyl coenzyme A carboxylase (ACC) complex. Biotin carboxylase (BC) catalyzes the carboxylation of biotin on its carrier protein (BCCP) and then the CO(2) group is transferred by the transcarboxylase to acetyl-CoA to form malonyl-CoA. The polypeptide is Acetyl-coenzyme A carboxylase carboxyl transferase subunit beta (Coxiella burnetii (strain Dugway 5J108-111)).